Here is a 42-residue protein sequence, read N- to C-terminus: Cytochrome b559 subunit beta (42 aa).

Residues Trp-17 to Ala-33 traverse the membrane as a helical segment. His-21 provides a ligand contact to heme.

The protein belongs to the PsbE/PsbF family. In terms of assembly, heterodimer of an alpha subunit and a beta subunit. PSII is composed of 1 copy each of membrane proteins PsbA, PsbB, PsbC, PsbD, PsbE, PsbF, PsbH, PsbI, PsbJ, PsbK, PsbL, PsbM, PsbT, PsbX, PsbY, PsbZ, Psb30/Ycf12, at least 3 peripheral proteins of the oxygen-evolving complex and a large number of cofactors. It forms dimeric complexes. Heme b serves as cofactor.

Its subcellular location is the plastid. It localises to the chloroplast thylakoid membrane. This b-type cytochrome is tightly associated with the reaction center of photosystem II (PSII). PSII is a light-driven water:plastoquinone oxidoreductase that uses light energy to abstract electrons from H(2)O, generating O(2) and a proton gradient subsequently used for ATP formation. It consists of a core antenna complex that captures photons, and an electron transfer chain that converts photonic excitation into a charge separation. The sequence is that of Cytochrome b559 subunit beta from Tupiella akineta (Green alga).